The sequence spans 61 residues: Venom protein 22.1 (61 aa).

The N-terminal stretch at 1-18 (MDIKGLLVILFFVLLITG) is a signal peptide.

This sequence belongs to the non-disulfide-bridged peptide (NDBP) superfamily. Long chain multifunctional peptide (group 2) family. Expressed by the venom gland.

The protein resides in the secreted. This chain is Venom protein 22.1, found in Lychas mucronatus (Chinese swimming scorpion).